The sequence spans 124 residues: Small ribosomal subunit protein eS6 (124 aa).

It belongs to the eukaryotic ribosomal protein eS6 family.

This is Small ribosomal subunit protein eS6 from Methanococcus maripaludis (strain C7 / ATCC BAA-1331).